Consider the following 184-residue polypeptide: NADH-quinone oxidoreductase subunit B (184 aa).

[4Fe-4S] cluster-binding residues include Cys-63, Cys-64, Cys-128, and Cys-158.

Belongs to the complex I 20 kDa subunit family. In terms of assembly, NDH-1 is composed of 14 different subunits. Subunits NuoB, C, D, E, F, and G constitute the peripheral sector of the complex. The cofactor is [4Fe-4S] cluster.

It localises to the cell inner membrane. It carries out the reaction a quinone + NADH + 5 H(+)(in) = a quinol + NAD(+) + 4 H(+)(out). NDH-1 shuttles electrons from NADH, via FMN and iron-sulfur (Fe-S) centers, to quinones in the respiratory chain. Couples the redox reaction to proton translocation (for every two electrons transferred, four hydrogen ions are translocated across the cytoplasmic membrane), and thus conserves the redox energy in a proton gradient. In Xanthomonas campestris pv. campestris (strain 8004), this protein is NADH-quinone oxidoreductase subunit B.